The sequence spans 393 residues: Proteasome-activating nucleotidase (393 aa).

Positions 15-53 (DEVQLVRLLEEKIKSLQIEIENLRKELNYYKAEMEKMLS) form a coiled coil. ATP-binding positions include 178-183 (GTGKTM) and tyrosine 317. Residues 365-393 (MNDLVEAINKINVKRNKMESMKERREKYS) adopt a coiled-coil conformation. A docks into pockets in the proteasome alpha-ring to cause gate opening region spans residues 391-393 (KYS).

The protein belongs to the AAA ATPase family. Homohexamer. The hexameric complex has a two-ring architecture resembling a top hat that caps the 20S proteasome core at one or both ends. Upon ATP-binding, the C-terminus of PAN interacts with the alpha-rings of the proteasome core by binding to the intersubunit pockets.

The protein localises to the cytoplasm. Its function is as follows. ATPase which is responsible for recognizing, binding, unfolding and translocation of substrate proteins into the archaeal 20S proteasome core particle. Is essential for opening the gate of the 20S proteasome via an interaction with its C-terminus, thereby allowing substrate entry and access to the site of proteolysis. Thus, the C-termini of the proteasomal ATPase function like a 'key in a lock' to induce gate opening and therefore regulate proteolysis. Unfolding activity requires energy from ATP hydrolysis, whereas ATP binding alone promotes ATPase-20S proteasome association which triggers gate opening, and supports translocation of unfolded substrates. This is Proteasome-activating nucleotidase from Saccharolobus solfataricus (strain ATCC 35092 / DSM 1617 / JCM 11322 / P2) (Sulfolobus solfataricus).